The following is a 201-amino-acid chain: Dephospho-CoA kinase (201 aa).

Positions 4–201 constitute a DPCK domain; sequence VIGLTGGIAS…LLDTWSNIEK (198 aa). 12 to 17 contributes to the ATP binding site; that stretch reads ASGKST.

It belongs to the CoaE family.

The protein localises to the cytoplasm. It catalyses the reaction 3'-dephospho-CoA + ATP = ADP + CoA + H(+). The protein operates within cofactor biosynthesis; coenzyme A biosynthesis; CoA from (R)-pantothenate: step 5/5. Functionally, catalyzes the phosphorylation of the 3'-hydroxyl group of dephosphocoenzyme A to form coenzyme A. This chain is Dephospho-CoA kinase, found in Bacillus licheniformis (strain ATCC 14580 / DSM 13 / JCM 2505 / CCUG 7422 / NBRC 12200 / NCIMB 9375 / NCTC 10341 / NRRL NRS-1264 / Gibson 46).